An 85-amino-acid chain; its full sequence is UPF0512 protein R (85 aa).

This sequence belongs to the UPF0512 family.

This Dictyostelium discoideum (Social amoeba) protein is UPF0512 protein R.